The primary structure comprises 356 residues: L-Lys-D/L-Arg epimerase (356 aa).

Substrate contacts are provided by residues T135 and 160–162 (KVK). Residues D190, E216, and D241 each contribute to the Mg(2+) site. Substrate is bound by residues K266, D296, and 319–321 (DLD).

The protein belongs to the mandelate racemase/muconate lactonizing enzyme family. Requires Mg(2+) as cofactor.

Catalyzes the epimerization of L-Lys-L-Arg to L-Lys-D-Arg. Can also catalyze the epimerization of other cationic dipeptides, such as L-Arg-L-Arg, L-Lys-L-Lys and L-Lys-L-His, but with lower efficiency (in vitro). The sequence is that of L-Lys-D/L-Arg epimerase from Methylococcus capsulatus (strain ATCC 33009 / NCIMB 11132 / Bath).